The chain runs to 1021 residues: Collagenase ColH (1021 aa).

Residues 1–30 (MKRKCLSKRLMLAITMATIFTVNSTLPIYA) form the signal peptide. The propeptide occupies 31–40 (AVDKNNATAA). The segment at 41–320 (VQNESKRYTV…SADQIKRHYD (280 aa)) is activator domain. The segment at 41 to 717 (VQNESKRYTV…TYDVVFHGYL (677 aa)) is S1 metalloprotease domain. The tract at residues 330–601 (PLDKFKKEGK…MQERIDNYEN (272 aa)) is catalytic subdomain. Residue Asp-421 participates in Zn(2+) binding. Glu-430 is a Ca(2+) binding site. His-455 is a binding site for Zn(2+). Glu-456 is a catalytic residue. His-459 is a Zn(2+) binding site. Ca(2+) contacts are provided by Gly-463, Val-467, and Gly-469. Glu-487 contributes to the Zn(2+) binding site. Residues 609-721 (DDYLVRHAYK…VFHGYLPNEG (113 aa)) are helper subdomain. The segment at 718 to 810 (PNEGDSKNSL…VSTTTAEIKD (93 aa)) is S2a domain. Residues Asn-725, Ser-726, Asp-753, Asp-755, Asp-794, Asn-814, Lys-815, Asp-842, Asp-844, Asp-884, Glu-908, Glu-910, Asn-912, Asn-913, Thr-931, Asp-937, Gln-938, and Asp-939 each contribute to the Ca(2+) site. One can recognise a PKD 1 domain in the interval 727-808 (LPYGKINGTY…SSVSTTTAEI (82 aa)). An S2b domain region spans residues 811–904 (LSENKLPVIY…KIKITDPVYP (94 aa)). The PKD 2 domain maps to 816–905 (LPVIYMHVPK…IKITDPVYPI (90 aa)). Residues 903 to 922 (YPIGTEKEPNNSKETASGPI) form a disordered region. The segment at 905–1021 (IGTEKEPNNS…RINIEGSVGR (117 aa)) is S3 collagen-binding domain. The segment at 1002 to 1004 (YMF) is collagen-binding.

Belongs to the peptidase M9B family. Collagenase subfamily. The cofactor is Ca(2+). Requires Zn(2+) as cofactor. In terms of processing, upon purification gives rise to 98 kDa, 105 kDa and 116 kDa (full-length) proteins, all of which have the same N-terminus.

Its subcellular location is the secreted. It catalyses the reaction Digestion of native collagen in the triple helical region at Xaa-|-Gly bonds. With synthetic peptides, a preference is shown for Gly at P3 and P1', Pro and Ala at P2 and P2', and hydroxyproline, Ala or Arg at P3'.. With respect to regulation, inhibited by EDTA. Inhibited by 1-10-phenanthroline. Inhibited by broad-spectrum zinc metalloprotease inhibitor batimastat. N-aryl mercaptoacetamide-based inhibitors have been isolated that act on clostridial collagenases with submicromolar affinity while having negligibile activity on human collagenases. Its function is as follows. Clostridial collagenases are among the most efficient degraders of eukaryotic collagen known; saprophytes use collagen as a carbon source while pathogens additionally digest collagen to aid in host colonization. Has both tripeptidylcarboxypeptidase on Gly-X-Y and endopeptidase activities; the endopeptidase cuts within the triple helix region of collagen while tripeptidylcarboxypeptidase successively digests the exposed ends, thus clostridial collagenases can digest large sections of collagen. The full-length protein has collagenase activity, while both the 116 kDa and 98 kDa forms act on gelatin. In vitro digestion of soluble calf skin collagen fibrils requires both ColG and ColH; ColG forms missing the second collagen-binding domain is also synergistic with ColH, although their overall efficiency is decreased. Digestion of collagen requires Ca(2+) and is inhibited by EDTA. The activator domain (residues 119-388) and catalytic subdomain (330-601) open and close around substrate allowing digestion when the protein is closed. This Hathewaya histolytica (Clostridium histolyticum) protein is Collagenase ColH.